A 119-amino-acid chain; its full sequence is Large ribosomal subunit protein bL20 (119 aa).

Belongs to the bacterial ribosomal protein bL20 family.

Functionally, binds directly to 23S ribosomal RNA and is necessary for the in vitro assembly process of the 50S ribosomal subunit. It is not involved in the protein synthesizing functions of that subunit. The chain is Large ribosomal subunit protein bL20 from Clostridium perfringens (strain ATCC 13124 / DSM 756 / JCM 1290 / NCIMB 6125 / NCTC 8237 / Type A).